The primary structure comprises 292 residues: Tetrahydromethanopterin:alpha-L-glutamate ligase (292 aa).

An ATP-grasp domain is found at 103 to 286; it reads SFLMEVHKIP…IAQNLIDEAL (184 aa). ATP is bound by residues lysine 138, 176-188, and arginine 204; that span reads QEFV…VYRD. Mg(2+) is bound by residues aspartate 247, glutamate 259, and asparagine 261. The Mn(2+) site is built by aspartate 247, glutamate 259, and asparagine 261.

The protein belongs to the RimK family. MptN subfamily. Homodimer. The cofactor is Mg(2+). It depends on Mn(2+) as a cofactor.

The enzyme catalyses 5,6,7,8-tetrahydromethanopterin + L-glutamate + ATP = 5,6,7,8-tetrahydrosarcinapterin + ADP + phosphate + H(+). Its pathway is cofactor biosynthesis; 5,6,7,8-tetrahydrosarcinapterin biosynthesis. Catalyzes the ATP or GTP-dependent addition of one L-glutamate molecule to tetrahydromethanopterin, producing tetrahydrosarcinapterin. In Methanococcus maripaludis (strain DSM 14266 / JCM 13030 / NBRC 101832 / S2 / LL), this protein is Tetrahydromethanopterin:alpha-L-glutamate ligase (mptN).